The sequence spans 105 residues: Pyrimidine/purine nucleoside phosphorylase (105 aa).

The protein belongs to the nucleoside phosphorylase PpnP family.

It catalyses the reaction a purine D-ribonucleoside + phosphate = a purine nucleobase + alpha-D-ribose 1-phosphate. The enzyme catalyses adenosine + phosphate = alpha-D-ribose 1-phosphate + adenine. The catalysed reaction is cytidine + phosphate = cytosine + alpha-D-ribose 1-phosphate. It carries out the reaction guanosine + phosphate = alpha-D-ribose 1-phosphate + guanine. It catalyses the reaction inosine + phosphate = alpha-D-ribose 1-phosphate + hypoxanthine. The enzyme catalyses thymidine + phosphate = 2-deoxy-alpha-D-ribose 1-phosphate + thymine. The catalysed reaction is uridine + phosphate = alpha-D-ribose 1-phosphate + uracil. It carries out the reaction xanthosine + phosphate = alpha-D-ribose 1-phosphate + xanthine. In terms of biological role, catalyzes the phosphorolysis of diverse nucleosides, yielding D-ribose 1-phosphate and the respective free bases. Can use uridine, adenosine, guanosine, cytidine, thymidine, inosine and xanthosine as substrates. Also catalyzes the reverse reactions. This chain is Pyrimidine/purine nucleoside phosphorylase, found in Cupriavidus necator (strain ATCC 17699 / DSM 428 / KCTC 22496 / NCIMB 10442 / H16 / Stanier 337) (Ralstonia eutropha).